Reading from the N-terminus, the 413-residue chain is Na(+)-translocating NADH-quinone reductase subunit B (413 aa).

The next 3 membrane-spanning stretches (helical) occupy residues I55–G75, F128–M148, and I163–T183. Residue T235 is modified to FMN phosphoryl threonine. The next 5 helical transmembrane spans lie at I267–V287, I296–S316, M324–T344, W357–Y377, and G380–I400.

It belongs to the NqrB/RnfD family. In terms of assembly, composed of six subunits; NqrA, NqrB, NqrC, NqrD, NqrE and NqrF. Requires FMN as cofactor.

The protein localises to the cell inner membrane. The enzyme catalyses a ubiquinone + n Na(+)(in) + NADH + H(+) = a ubiquinol + n Na(+)(out) + NAD(+). Functionally, NQR complex catalyzes the reduction of ubiquinone-1 to ubiquinol by two successive reactions, coupled with the transport of Na(+) ions from the cytoplasm to the periplasm. NqrA to NqrE are probably involved in the second step, the conversion of ubisemiquinone to ubiquinol. The chain is Na(+)-translocating NADH-quinone reductase subunit B from Vibrio campbellii (strain ATCC BAA-1116).